Here is a 103-residue protein sequence, read N- to C-terminus: Pyrimidine/purine nucleoside phosphorylase (103 aa).

This sequence belongs to the nucleoside phosphorylase PpnP family.

The catalysed reaction is a purine D-ribonucleoside + phosphate = a purine nucleobase + alpha-D-ribose 1-phosphate. It catalyses the reaction adenosine + phosphate = alpha-D-ribose 1-phosphate + adenine. The enzyme catalyses cytidine + phosphate = cytosine + alpha-D-ribose 1-phosphate. It carries out the reaction guanosine + phosphate = alpha-D-ribose 1-phosphate + guanine. The catalysed reaction is inosine + phosphate = alpha-D-ribose 1-phosphate + hypoxanthine. It catalyses the reaction thymidine + phosphate = 2-deoxy-alpha-D-ribose 1-phosphate + thymine. The enzyme catalyses uridine + phosphate = alpha-D-ribose 1-phosphate + uracil. It carries out the reaction xanthosine + phosphate = alpha-D-ribose 1-phosphate + xanthine. In terms of biological role, catalyzes the phosphorolysis of diverse nucleosides, yielding D-ribose 1-phosphate and the respective free bases. Can use uridine, adenosine, guanosine, cytidine, thymidine, inosine and xanthosine as substrates. Also catalyzes the reverse reactions. The sequence is that of Pyrimidine/purine nucleoside phosphorylase from Shewanella sp. (strain MR-4).